Here is a 366-residue protein sequence, read N- to C-terminus: Flagellar P-ring protein (366 aa).

The N-terminal stretch at 1–20 (MVIKFLSALILLLVTTAAQA) is a signal peptide.

Belongs to the FlgI family. In terms of assembly, the basal body constitutes a major portion of the flagellar organelle and consists of four rings (L,P,S, and M) mounted on a central rod.

The protein resides in the periplasm. Its subcellular location is the bacterial flagellum basal body. Its function is as follows. Assembles around the rod to form the L-ring and probably protects the motor/basal body from shearing forces during rotation. In Escherichia coli (strain UTI89 / UPEC), this protein is Flagellar P-ring protein.